The chain runs to 103 residues: Histone H4 (103 aa).

Over residues 1–14 the composition is skewed to gly residues; the sequence is MSGRGKGGKGLGKG. Residues 1–20 form a disordered region; that stretch reads MSGRGKGGKGLGKGGAKRHR. Ser-2 carries the post-translational modification N-acetylserine. Lys-17 is modified (N6-acetyllysine). Residues 17 to 21 mediate DNA binding; the sequence is KRHRK. Position 21 is an N6-methyllysine (Lys-21).

It belongs to the histone H4 family. In terms of assembly, the nucleosome is a histone octamer containing two molecules each of H2A, H2B, H3 and H4 assembled in one H3-H4 heterotetramer and two H2A-H2B heterodimers. The octamer wraps approximately 147 bp of DNA.

The protein localises to the nucleus. The protein resides in the chromosome. Functionally, core component of nucleosome. Nucleosomes wrap and compact DNA into chromatin, limiting DNA accessibility to the cellular machineries which require DNA as a template. Histones thereby play a central role in transcription regulation, DNA repair, DNA replication and chromosomal stability. DNA accessibility is regulated via a complex set of post-translational modifications of histones, also called histone code, and nucleosome remodeling. This chain is Histone H4, found in Eucalyptus globulus (Tasmanian blue gum).